We begin with the raw amino-acid sequence, 487 residues long: 3-octaprenyl-4-hydroxybenzoate carboxy-lyase (487 aa).

A Mn(2+)-binding site is contributed by Asn-172. Residues 175-177, 189-191, and 194-195 each bind prenylated FMN; these read IYR, RWL, and RG. Glu-238 is a binding site for Mn(2+). Asp-287 (proton donor) is an active-site residue.

It belongs to the UbiD family. Homohexamer. Prenylated FMN serves as cofactor. The cofactor is Mn(2+).

It localises to the cell membrane. It catalyses the reaction a 4-hydroxy-3-(all-trans-polyprenyl)benzoate + H(+) = a 2-(all-trans-polyprenyl)phenol + CO2. It functions in the pathway cofactor biosynthesis; ubiquinone biosynthesis. Functionally, catalyzes the decarboxylation of 3-octaprenyl-4-hydroxy benzoate to 2-octaprenylphenol, an intermediate step in ubiquinone biosynthesis. The polypeptide is 3-octaprenyl-4-hydroxybenzoate carboxy-lyase (Nitrosospira multiformis (strain ATCC 25196 / NCIMB 11849 / C 71)).